We begin with the raw amino-acid sequence, 233 residues long: Putative 26S proteasome non-ATPase regulatory subunit 8 homolog B (233 aa).

An N-acetylmethionine modification is found at methionine 1. Residues 38-217 enclose the PCI domain; the sequence is DHYLISLSLN…APCKEIPSLQ (180 aa).

The protein belongs to the proteasome subunit S14 family. Component of the 19S regulatory particle (RP/PA700) lid subcomplex of the 26S proteasome. The 26S proteasome is composed of a core protease (CP), known as the 20S proteasome, capped at one or both ends by the 19S regulatory particle (RP/PA700). The RP/PA700 complex is composed of at least 17 different subunits in two subcomplexes, the base and the lid, which form the portions proximal and distal to the 20S proteolytic core, respectively. Interacts with UCH1 and UCH2.

Functionally, acts as a regulatory subunit of the 26S proteasome which is involved in the ATP-dependent degradation of ubiquitinated proteins. In Arabidopsis thaliana (Mouse-ear cress), this protein is Putative 26S proteasome non-ATPase regulatory subunit 8 homolog B.